The primary structure comprises 109 residues: Putative double-stranded DNA mimic protein YciU (109 aa).

Belongs to the putative dsDNA mimic protein family.

In terms of biological role, may act as a double-stranded DNA (dsDNA) mimic. Probably regulates the activity of a dsDNA-binding protein. In Salmonella arizonae (strain ATCC BAA-731 / CDC346-86 / RSK2980), this protein is Putative double-stranded DNA mimic protein YciU.